The primary structure comprises 1505 residues: Probable serine/threonine-protein kinase irlD (1505 aa).

Residues 1–18 are compositionally biased toward basic residues; it reads MGPKKGKRSHSKNHHHHN. 4 disordered regions span residues 1–30, 121–211, 548–571, and 862–1013; these read MGPKKGKRSHSKNHHHHNNGNNNNNNNSGG, IPQP…NNIL, TTTTTTTTTTTTTTIDKDEKDKEN, and EENE…TIAT. The span at 139–158 shows a compositional bias: low complexity; sequence SISTTTTTTTATAIEIESSS. The segment covering 159–172 has biased composition (polar residues); it reads GLTSNITDSTEIQL. Low complexity-rich tracts occupy residues 173 to 209 and 548 to 561; these read DSTTTDTKTTSTTSTTTNNSSDSNNNNNNNNNNNSNN and TTTTTTTTTTTTTT. Basic and acidic residues-rich tracts occupy residues 562-571 and 862-882; these read IDKDEKDKEN and EENEKKRLKEKRKKEEKEKKK. The stretch at 846–892 forms a coiled coil; sequence IRTEESLKAEKDLLEQEENEKKRLKEKRKKEEKEKKKQQNLKQKSLI. Residues 896 to 924 show a composition bias toward low complexity; it reads TTTTTTTTPIPITVPIPTQTQTPTQTPTQ. Residues 925 to 943 are compositionally biased toward pro residues; sequence TPIPTPIPTTPIPTTPIPI. Low complexity-rich tracts occupy residues 944–954 and 960–977; these read PIQLTPTTPKT and TPKTPTTPKTPITPKTPK. Over residues 978 to 989 the composition is skewed to polar residues; sequence NSTLDKQTISTP. A Protein kinase domain is found at 1054-1324; it reads RKDEFIIGRG…TENILLHPFF (271 aa). Residues 1060-1068 and Lys1083 each bind ATP; that span reads IGRGSNGTL. Asp1194 acts as the Proton acceptor in catalysis. The 179-residue stretch at 1327–1505 folds into the KEN domain; sequence HEKKVKFIDA…LIYFNDLIIK (179 aa).

It belongs to the protein kinase superfamily. Ser/Thr protein kinase family.

It carries out the reaction L-seryl-[protein] + ATP = O-phospho-L-seryl-[protein] + ADP + H(+). The catalysed reaction is L-threonyl-[protein] + ATP = O-phospho-L-threonyl-[protein] + ADP + H(+). The polypeptide is Probable serine/threonine-protein kinase irlD (irlD) (Dictyostelium discoideum (Social amoeba)).